Consider the following 204-residue polypeptide: Auxin-binding protein 4 (204 aa).

Positions 1–41 (MVRRRPATGAAPRPHLAAVGRGLLLASVLAAAASSLPVAES) are cleaved as a signal peptide. Cys43 and Cys196 are disulfide-bonded. Residues His98, His100, and Glu104 each contribute to the Zn(2+) site. An N-linked (GlcNAc...) asparagine glycan is attached at Asn136. His147 provides a ligand contact to Zn(2+). The Prevents secretion from ER motif lies at 201–204 (KDEL).

In terms of assembly, homodimer.

It is found in the endoplasmic reticulum lumen. This is probably a receptor for the plant hormone auxin. This is Auxin-binding protein 4 (ABP4) from Zea mays (Maize).